The chain runs to 634 residues: Probable potassium transport system protein Kup (634 aa).

12 helical membrane passes run 19–39 (AIGL…TSPL), 62–82 (VLSL…VIFV), 113–133 (FVVV…MITP), 150–170 (GLEH…FLIQ), 177–197 (IGIL…ALGV), 225–245 (IGVA…ALYA), 259–279 (WFLL…ATIL), 291–311 (LLAP…ATVI), 349–369 (IYIG…VLGF), 379–399 (YGVA…VVIW), 406–426 (LWLG…FFAA), and 431–451 (VIQG…LMST).

It belongs to the HAK/KUP transporter (TC 2.A.72) family.

It is found in the cell inner membrane. The enzyme catalyses K(+)(in) + H(+)(in) = K(+)(out) + H(+)(out). Functionally, transport of potassium into the cell. Likely operates as a K(+):H(+) symporter. The polypeptide is Probable potassium transport system protein Kup (Pseudomonas aeruginosa (strain UCBPP-PA14)).